The primary structure comprises 427 residues: UPF0229 protein YeaH (427 aa).

Residues 87–110 form a disordered region; the sequence is RIERSQGGGGGSGSGQGQASQDGE. Positions 92–102 are enriched in gly residues; it reads QGGGGGSGSGQ.

It belongs to the UPF0229 family.

This chain is UPF0229 protein YeaH, found in Escherichia coli O6:K15:H31 (strain 536 / UPEC).